Consider the following 263-residue polypeptide: Probable HTH-type transcriptional regulator ArcR (263 aa).

Positions 14 to 74 (ITSVLNAVEI…DGDGTYQLGD (61 aa)) constitute an HTH iclR-type domain. A DNA-binding region (H-T-H motif) is located at residues 35 to 54 (LQELTTELDLTKATIHTYMA). One can recognise an IclR-ED domain in the interval 89 to 262 (LYRLGREEID…ANIIEVRLET (174 aa)).

Probably regulates transcription of the arcABC operon. This is Probable HTH-type transcriptional regulator ArcR (arcR) from Halobacterium salinarum (strain ATCC 29341 / DSM 671 / R1).